The sequence spans 179 residues: ADP-ribosylation factor 1-like 1 (179 aa).

Residue glycine 2 is the site of N-myristoyl glycine attachment. Residues 3 to 16 (LFFSKISSFMFPNI) are important for the stable binding to the membranes. Residues 24–32 (GLDGAGKTT), 126–129 (NKQD), and alanine 160 each bind GTP.

The protein belongs to the small GTPase superfamily. Arf family.

The protein localises to the golgi apparatus membrane. It carries out the reaction GTP + H2O = GDP + phosphate + H(+). Its activity is regulated as follows. Alternates between an inactive GDP-bound form and an active GTP-bound form. Activated by a guanine nucleotide-exchange factor (GEF) and inactivated by GTPase-activating protein (GAP). Its function is as follows. Small GTPase involved in protein trafficking between different compartments. Modulates vesicle budding and uncoating within the Golgi complex. In its GTP-bound form, triggers the recruitment of coatomer proteins to the Golgi membrane. The hydrolysis of ARF1-bound GTP, which is mediated by ARFGAPs proteins, is required for dissociation of coat proteins from Golgi membranes and vesicles. This is ADP-ribosylation factor 1-like 1 (arf-1.1) from Caenorhabditis elegans.